The primary structure comprises 97 residues: U6-theraphotoxin-Hhn1a 2 (97 aa).

The signal sequence occupies residues Met-1–Ala-33. The propeptide occupies Ser-34–Arg-61. Intrachain disulfides connect Cys-63/Cys-77, Cys-70/Cys-82, and Cys-76/Cys-89.

Belongs to the neurotoxin 10 (Hwtx-1) family. 12 (Hntx-12) subfamily. As to expression, expressed by the venom gland.

It is found in the secreted. Its function is as follows. Ion channel inhibitor. The sequence is that of U6-theraphotoxin-Hhn1a 2 from Cyriopagopus hainanus (Chinese bird spider).